The primary structure comprises 603 residues: Arginine--tRNA ligase (603 aa).

The short motif at 143–153 (PNIAKEMHVGH) is the 'HIGH' region element.

It belongs to the class-I aminoacyl-tRNA synthetase family. In terms of assembly, monomer.

The protein resides in the cytoplasm. The enzyme catalyses tRNA(Arg) + L-arginine + ATP = L-arginyl-tRNA(Arg) + AMP + diphosphate. The polypeptide is Arginine--tRNA ligase (Prochlorococcus marinus (strain MIT 9303)).